A 254-amino-acid chain; its full sequence is CDP-diacylglycerol pyrophosphatase (254 aa).

The helical transmembrane segment at 6 to 26 threads the bilayer; that stretch reads YFLLALLVAILAALAGGYYWL.

Belongs to the Cdh family.

The protein resides in the cell inner membrane. It carries out the reaction a CDP-1,2-diacyl-sn-glycerol + H2O = a 1,2-diacyl-sn-glycero-3-phosphate + CMP + 2 H(+). It participates in phospholipid metabolism; CDP-diacylglycerol degradation; phosphatidate from CDP-diacylglycerol: step 1/1. The sequence is that of CDP-diacylglycerol pyrophosphatase from Klebsiella pneumoniae (strain 342).